A 77-amino-acid chain; its full sequence is Acyl carrier protein (77 aa).

One can recognise a Carrier domain in the interval 2–77; the sequence is SDVAKRVKEI…DAIDYITEHT (76 aa). Position 37 is an O-(pantetheine 4'-phosphoryl)serine (S37).

The protein belongs to the acyl carrier protein (ACP) family. Post-translationally, 4'-phosphopantetheine is transferred from CoA to a specific serine of apo-ACP by AcpS. This modification is essential for activity because fatty acids are bound in thioester linkage to the sulfhydryl of the prosthetic group.

Its subcellular location is the cytoplasm. The protein operates within lipid metabolism; fatty acid biosynthesis. In terms of biological role, carrier of the growing fatty acid chain in fatty acid biosynthesis. This Trichlorobacter lovleyi (strain ATCC BAA-1151 / DSM 17278 / SZ) (Geobacter lovleyi) protein is Acyl carrier protein.